The chain runs to 470 residues: AAA-ATPase At5g40000 (470 aa).

The first 30 residues, 1 to 30 (MMMMGDSFGSIGSSMASLFFLWATIQQIFP), serve as a signal peptide directing secretion. 248 to 255 (GPPGTGKS) serves as a coordination point for ATP.

This sequence belongs to the AAA ATPase family. BCS1 subfamily. Requires Mg(2+) as cofactor.

The enzyme catalyses ATP + H2O = ADP + phosphate + H(+). The polypeptide is AAA-ATPase At5g40000 (Arabidopsis thaliana (Mouse-ear cress)).